The chain runs to 200 residues: NADH-quinone oxidoreductase subunit C (200 aa).

This sequence belongs to the complex I 30 kDa subunit family. NDH-1 is composed of 14 different subunits. Subunits NuoB, C, D, E, F, and G constitute the peripheral sector of the complex.

It is found in the cell inner membrane. The catalysed reaction is a quinone + NADH + 5 H(+)(in) = a quinol + NAD(+) + 4 H(+)(out). Functionally, NDH-1 shuttles electrons from NADH, via FMN and iron-sulfur (Fe-S) centers, to quinones in the respiratory chain. The immediate electron acceptor for the enzyme in this species is believed to be ubiquinone. Couples the redox reaction to proton translocation (for every two electrons transferred, four hydrogen ions are translocated across the cytoplasmic membrane), and thus conserves the redox energy in a proton gradient. This is NADH-quinone oxidoreductase subunit C from Burkholderia ambifaria (strain ATCC BAA-244 / DSM 16087 / CCUG 44356 / LMG 19182 / AMMD) (Burkholderia cepacia (strain AMMD)).